The following is a 153-amino-acid chain: Superoxide dismutase [Cu-Zn] (153 aa).

The Cu cation site is built by His45, His47, and His62. Cys56 and Cys145 are joined by a disulfide. Residues His62, His70, His79, and Asp82 each contribute to the Zn(2+) site. His119 provides a ligand contact to Cu cation.

Belongs to the Cu-Zn superoxide dismutase family. As to quaternary structure, homodimer. It depends on Cu cation as a cofactor. Requires Zn(2+) as cofactor.

It localises to the cytoplasm. It carries out the reaction 2 superoxide + 2 H(+) = H2O2 + O2. Functionally, destroys radicals which are normally produced within the cells and which are toxic to biological systems. The protein is Superoxide dismutase [Cu-Zn] of Drosophila yakuba (Fruit fly).